The primary structure comprises 369 residues: 3-dehydroquinate synthase (369 aa).

NAD(+)-binding positions include Asp-71–Lys-76, Gly-105–Asp-109, Thr-129–Thr-130, Lys-142, Lys-151, and Thr-169–Thr-172. 3 residues coordinate Zn(2+): Glu-184, His-247, and His-264.

Belongs to the sugar phosphate cyclases superfamily. Dehydroquinate synthase family. It depends on Co(2+) as a cofactor. The cofactor is Zn(2+). NAD(+) serves as cofactor.

It localises to the cytoplasm. The catalysed reaction is 7-phospho-2-dehydro-3-deoxy-D-arabino-heptonate = 3-dehydroquinate + phosphate. It functions in the pathway metabolic intermediate biosynthesis; chorismate biosynthesis; chorismate from D-erythrose 4-phosphate and phosphoenolpyruvate: step 2/7. In terms of biological role, catalyzes the conversion of 3-deoxy-D-arabino-heptulosonate 7-phosphate (DAHP) to dehydroquinate (DHQ). The chain is 3-dehydroquinate synthase from Dichelobacter nodosus (strain VCS1703A).